Reading from the N-terminus, the 322-residue chain is MNQMVDMGHAVPAARGLREARAFAPASVANVAVGFDLLGYPLDGVGDTVTVRRIDAPVVRIAAIRGTTVALPLEAERNTAGAALMSLRAALALPFGFELEIDKGIALSSGMGGSAASCVAALVAANALLDTPVSTDQLYQHALDGEAVASGSRHGDNLGPLFLGGLVLCTLERLVPIAVPEAWHSLVVHPEAVLETRRAREALAGDYRLSEFVAQSTNLALVLAGCHAGDADLVRAGLRDVLVEPRRAPLITGFAQAKQAALAHAALGASISGAGPSVFAWFETRAAAAAAAPAVQAAFAGVGLDSQAWVTPINSPAARLLA.

106–116 is a binding site for ATP; that stretch reads ALSSGMGGSAA.

This sequence belongs to the GHMP kinase family. Homoserine kinase subfamily.

It is found in the cytoplasm. The enzyme catalyses L-homoserine + ATP = O-phospho-L-homoserine + ADP + H(+). Its pathway is amino-acid biosynthesis; L-threonine biosynthesis; L-threonine from L-aspartate: step 4/5. Catalyzes the ATP-dependent phosphorylation of L-homoserine to L-homoserine phosphate. This chain is Homoserine kinase, found in Xanthomonas campestris pv. campestris (strain B100).